Reading from the N-terminus, the 236-residue chain is Phosphoribosylaminoimidazole-succinocarboxamide synthase (236 aa).

The protein belongs to the SAICAR synthetase family.

The catalysed reaction is 5-amino-1-(5-phospho-D-ribosyl)imidazole-4-carboxylate + L-aspartate + ATP = (2S)-2-[5-amino-1-(5-phospho-beta-D-ribosyl)imidazole-4-carboxamido]succinate + ADP + phosphate + 2 H(+). Its pathway is purine metabolism; IMP biosynthesis via de novo pathway; 5-amino-1-(5-phospho-D-ribosyl)imidazole-4-carboxamide from 5-amino-1-(5-phospho-D-ribosyl)imidazole-4-carboxylate: step 1/2. This is Phosphoribosylaminoimidazole-succinocarboxamide synthase from Hahella chejuensis (strain KCTC 2396).